We begin with the raw amino-acid sequence, 424 residues long: Subtilisin-like protease 2 (424 aa).

An N-terminal signal peptide occupies residues 1-17; it reads MQLLNLGLLLLLPFVAG. Residues 18–123 constitute a propeptide that is removed on maturation; it reads EIAPQPEPLR…VHPDQHVYLA (106 aa). An Inhibitor I9 domain is found at 37 to 123; it reads QYIVTLKEGL…VHPDQHVYLA (87 aa). In terms of domain architecture, Peptidase S8 spans 132–424; sequence RWGLGYMSSK…RKFTLPKNTK (293 aa). Active-site charge relay system residues include aspartate 170 and histidine 202. N-linked (GlcNAc...) asparagine glycans are attached at residues asparagine 249, asparagine 262, and asparagine 350. Serine 359 acts as the Charge relay system in catalysis. Asparagine 390 carries an N-linked (GlcNAc...) asparagine glycan.

Belongs to the peptidase S8 family.

The protein localises to the secreted. Functionally, secreted subtilisin-like serine protease with keratinolytic activity that contributes to pathogenicity. This Arthroderma otae (Microsporum canis) protein is Subtilisin-like protease 2 (SUB2).